The chain runs to 283 residues: Putative 4-diphosphocytidyl-2-C-methyl-D-erythritol kinase (283 aa).

K10 is an active-site residue. Residue 94 to 104 coordinates ATP; it reads PVCAGLGGGST. Residue D136 is part of the active site.

This sequence belongs to the GHMP kinase family. IspE subfamily.

The catalysed reaction is 4-CDP-2-C-methyl-D-erythritol + ATP = 4-CDP-2-C-methyl-D-erythritol 2-phosphate + ADP + H(+). Catalyzes the phosphorylation of the position 2 hydroxy group of 4-diphosphocytidyl-2C-methyl-D-erythritol. This Streptococcus agalactiae serotype III (strain NEM316) protein is Putative 4-diphosphocytidyl-2-C-methyl-D-erythritol kinase.